We begin with the raw amino-acid sequence, 218 residues long: Glutathione S-transferase U24 (218 aa).

One can recognise a GST N-terminal domain in the interval 3 to 82 (DEVILLDFWA…YIDETWPDNN (80 aa)). Glutathione-binding positions include 13-14 (SM), 39-40 (NK), 53-54 (KI), and 66-67 (ES). Residues 88-215 (DPYKRAHAKF…TFISERRKKL (128 aa)) enclose the GST C-terminal domain. Phosphothreonine is present on threonine 148.

The protein belongs to the GST superfamily. Tau family.

Its subcellular location is the cytoplasm. The protein localises to the cytosol. The catalysed reaction is RX + glutathione = an S-substituted glutathione + a halide anion + H(+). May be involved in the conjugation of reduced glutathione to a wide number of exogenous and endogenous hydrophobic electrophiles and have a detoxification role against certain herbicides. This chain is Glutathione S-transferase U24 (GSTU24), found in Arabidopsis thaliana (Mouse-ear cress).